The following is a 112-amino-acid chain: Integration host factor subunit alpha (112 aa).

It belongs to the bacterial histone-like protein family. In terms of assembly, heterodimer of an alpha and a beta chain.

Its function is as follows. This protein is one of the two subunits of integration host factor, a specific DNA-binding protein that functions in genetic recombination as well as in transcriptional and translational control. The polypeptide is Integration host factor subunit alpha (Rhizobium rhizogenes (strain K84 / ATCC BAA-868) (Agrobacterium radiobacter)).